Reading from the N-terminus, the 281-residue chain is MAVSYNALAQSLARSSCFIPKPYSFRDTKLRSRSNVVFACNDNKNIALQAKVDNLLDRIKWDDKGLAVAIAQNVDTGAVLMQGFVNREALSTTISSRKATFFSRSRSTLWTKGETSNNFINILDVYVDCDRDSIIYLGTPDGPTCHTGEETCYYTSVFDQLNNDEASGNKLALTTLYSLESIISKRKEESTVPQEGKPSWTRRLLTDDALLCSKIREEADELCRTLEDNEEVSRTPSEMADVLYHAMVLLSKRGVKMEDVLEVLRKRFSQSGIEEKQNRTK.

A chloroplast-targeting transit peptide spans 1 to 50; that stretch reads MAVSYNALAQSLARSSCFIPKPYSFRDTKLRSRSNVVFACNDNKNIALQA. The segment at 51 to 178 is phosphoribosyl-AMP cyclohydrolase; sequence KVDNLLDRIK…NKLALTTLYS (128 aa). Residues 179–281 form a phosphoribosyl-ATP pyrophosphohydrolase region; that stretch reads LESIISKRKE…GIEEKQNRTK (103 aa).

In the N-terminal section; belongs to the PRA-CH family. This sequence in the C-terminal section; belongs to the PRA-PH family. As to expression, ubiquitously expressed throughout development.

It localises to the plastid. The protein localises to the chloroplast. It catalyses the reaction 1-(5-phospho-beta-D-ribosyl)-ATP + H2O = 1-(5-phospho-beta-D-ribosyl)-5'-AMP + diphosphate + H(+). The enzyme catalyses 1-(5-phospho-beta-D-ribosyl)-5'-AMP + H2O = 1-(5-phospho-beta-D-ribosyl)-5-[(5-phospho-beta-D-ribosylamino)methylideneamino]imidazole-4-carboxamide. Its pathway is amino-acid biosynthesis; L-histidine biosynthesis; L-histidine from 5-phospho-alpha-D-ribose 1-diphosphate: step 2/9. The protein operates within amino-acid biosynthesis; L-histidine biosynthesis; L-histidine from 5-phospho-alpha-D-ribose 1-diphosphate: step 3/9. The sequence is that of Histidine biosynthesis bifunctional protein hisIE, chloroplastic (HISN2) from Arabidopsis thaliana (Mouse-ear cress).